The following is a 95-amino-acid chain: UPF0213 protein YPK_3712 (95 aa).

A GIY-YIG domain is found at 4 to 79 (SLWHLYLLRT…KQLSKQQKEK (76 aa)).

Belongs to the UPF0213 family.

The chain is UPF0213 protein YPK_3712 from Yersinia pseudotuberculosis serotype O:3 (strain YPIII).